The sequence spans 443 residues: EGF-containing fibulin-like extracellular matrix protein 2 (443 aa).

A signal peptide spans 1 to 27 (MLPFASCLPGSLLLWAFLLLLLGAASP). Pyrrolidone carboxylic acid is present on Q28. Residues 36-81 (YTECTDGYEWDADSQHCRDVNECLTIPEACKGEMKCINHYGGYLCL) form the EGF-like 1; atypical domain. 18 disulfides stabilise this stretch: C58-C121, C65-C80, C71-C109, C127-C140, C134-C149, C151-C162, C168-C177, C173-C186, C188-C201, C207-C217, C213-C226, C228-C241, C247-C258, C254-C267, C269-C281, C287-C300, C294-C309, and C315-C327. Residues 91–117 (LHGEGPPPPAAHAQQPNPCPQGYEPDE) form a disordered region. The region spanning 123–163 (DVDECTQALHDCRPSQDCHNLPGSYQCTCPDGYRKIGPECV) is the EGF-like 2; calcium-binding domain. In terms of domain architecture, EGF-like 3; calcium-binding spans 164 to 202 (DIDECRYRYCQHRCVNLPGSFRCQCEPGFQLGPNNRSCV). An N-linked (GlcNAc...) asparagine glycan is attached at N198. The EGF-like 4; calcium-binding domain occupies 203–242 (DVNECDMGAPCEQRCFNSYGTFLCRCNQGYELHRDGFSCS). One can recognise an EGF-like 5; calcium-binding domain in the interval 243–282 (DIDECGYSSYLCQYRCVNEPGRFSCHCPQGYQLLATRLCQ). Positions 283–328 (DIDECETGAHQCSEAQTCVNFHGGYRCVDTNRCVEPYVQVSDNRCL) constitute an EGF-like 6; calcium-binding domain. Residue N394 is glycosylated (N-linked (GlcNAc...) asparagine).

It belongs to the fibulin family. As to quaternary structure, homodimer; disulfide-linked. Multimer; allows heparin binding. Monomer. Binds preferentially to p53 mutants. Interacts with FBN1 (via N-terminal domain); this interaction inhibits EFEMP2 binding to LOX and ELN. Interacts with ELN with moderate affinity; this interaction regulates ELN self-assembly maturation stage. Interacts with PCOLCE. Interacts with collagen type IV trimer (COL4A1-COL4A1-COL4A2), NID2 and moderately with COL15A1-derived endostatin. Interacts with EMILIN1; this interaction promotes the incorporation of EFEMP2 into the extracellular matrix. Interacts with LTBP4; the LTBP4 long form (LTBP4L) has a stronger binding affinity than the LTBP4 short form and the LTBP4 long form promotes fibrillar deposition of EFEMP2. Interacts with LOX (via propeptide); this interaction is strong and facilitates formation of ternary complexes with ELN during elastic fiber assembly; this interaction limits interaction of EFEMP2 with FBLN5. Interacts with PITX2. Interacts with FBLN5 with moderate affinity. Interacts with LOXL1 (via propeptide), LTBP1 and TGFB1 stronger than with LOXL2 and LTBP3. Post-translationally, N-glycosylated; contains mostly complex-type glycans. Not O-glycosylated. Cleaved by ELANE; produces a 50-55 kDa fragment. Cleaved by MMP2 and MMP9; produces several fragments. Expressed in elastic fibers of the skin, near the dermal-epidermal junction, surrounding the hair follicles and throughout the dermis. Expressed in tendon around tenocytes. Prominently expressed in cartilage, bone, perichondrium and ligaments. Also detected in bone marrow stroma. Expressed in aorta, lung, and esophagus.

The protein localises to the secreted. Its subcellular location is the extracellular space. The protein resides in the extracellular matrix. It is found in the basement membrane. In terms of biological role, plays a crucial role in elastic fiber formation in tissue, and in the formation of ultrastructural connections between elastic laminae and smooth muscle cells in the aorta, therefore participates in terminal differentiation and maturation of smooth muscle cell (SMC) and in the mechanical properties and wall integrity maintenance of the aorta. In addition, is involved in the control of collagen fibril assembly in tissue throught proteolytic activation of LOX leading to cross- linking of collagen and elastin. Also promotes ELN coacervation and participates in the deposition of ELN coacervates on to microfibrils but also regulates ELN cross- linking through LOX interaction. Moreover adheres to the cells through heparin binding in a calcium-dependent manner and regulates vascularlar smooth muscle cells proliferation through angiotensin signaling. The polypeptide is EGF-containing fibulin-like extracellular matrix protein 2 (Mus musculus (Mouse)).